Reading from the N-terminus, the 145-residue chain is Large ribosomal subunit protein uL11 (145 aa).

It belongs to the universal ribosomal protein uL11 family. As to quaternary structure, part of the ribosomal stalk of the 50S ribosomal subunit. Interacts with L10 and the large rRNA to form the base of the stalk. L10 forms an elongated spine to which L12 dimers bind in a sequential fashion forming a multimeric L10(L12)X complex. Post-translationally, one or more lysine residues are methylated.

Its function is as follows. Forms part of the ribosomal stalk which helps the ribosome interact with GTP-bound translation factors. The protein is Large ribosomal subunit protein uL11 of Francisella philomiragia subsp. philomiragia (strain ATCC 25017 / CCUG 19701 / FSC 153 / O#319-036).